The following is a 156-amino-acid chain: 6,7-dimethyl-8-ribityllumazine synthase (156 aa).

Residues Phe-24, 58-60 (AFE), and 82-84 (VII) contribute to the 5-amino-6-(D-ribitylamino)uracil site. A (2S)-2-hydroxy-3-oxobutyl phosphate-binding site is contributed by 87–88 (ST). The active-site Proton donor is His-90. Residue Phe-115 participates in 5-amino-6-(D-ribitylamino)uracil binding. (2S)-2-hydroxy-3-oxobutyl phosphate is bound at residue Arg-129.

It belongs to the DMRL synthase family.

It catalyses the reaction (2S)-2-hydroxy-3-oxobutyl phosphate + 5-amino-6-(D-ribitylamino)uracil = 6,7-dimethyl-8-(1-D-ribityl)lumazine + phosphate + 2 H2O + H(+). It participates in cofactor biosynthesis; riboflavin biosynthesis; riboflavin from 2-hydroxy-3-oxobutyl phosphate and 5-amino-6-(D-ribitylamino)uracil: step 1/2. Its function is as follows. Catalyzes the formation of 6,7-dimethyl-8-ribityllumazine by condensation of 5-amino-6-(D-ribitylamino)uracil with 3,4-dihydroxy-2-butanone 4-phosphate. This is the penultimate step in the biosynthesis of riboflavin. The sequence is that of 6,7-dimethyl-8-ribityllumazine synthase from Chlorobaculum parvum (strain DSM 263 / NCIMB 8327) (Chlorobium vibrioforme subsp. thiosulfatophilum).